The chain runs to 462 residues: Chromosomal replication initiator protein DnaA (462 aa).

Positions 1–84 are domain I, interacts with DnaA modulators; sequence MAVSLWQQCI…RFDIGSRPSA (84 aa). The segment at 84–125 is domain II; the sequence is ARTVQPAPAAPRPTTGHTQTKARVGTAFNIQAEPMANANHRS. Residues 126–342 form a domain III, AAA+ region region; that stretch reads NINPTYQFDN…GALNRVIANA (217 aa). Residues glycine 170, glycine 172, lysine 173, and threonine 174 each coordinate ATP. Residues 343-462 form a domain IV, binds dsDNA region; the sequence is NFTGRPITID…YANLIRTLSS (120 aa).

It belongs to the DnaA family. In terms of assembly, oligomerizes as a right-handed, spiral filament on DNA at oriC.

It localises to the cytoplasm. Plays an essential role in the initiation and regulation of chromosomal replication. ATP-DnaA binds to the origin of replication (oriC) to initiate formation of the DNA replication initiation complex once per cell cycle. Binds the DnaA box (a 9 base pair repeat at the origin) and separates the double-stranded (ds)DNA. Forms a right-handed helical filament on oriC DNA; dsDNA binds to the exterior of the filament while single-stranded (ss)DNA is stabiized in the filament's interior. The ATP-DnaA-oriC complex binds and stabilizes one strand of the AT-rich DNA unwinding element (DUE), permitting loading of DNA polymerase. After initiation quickly degrades to an ADP-DnaA complex that is not apt for DNA replication. Binds acidic phospholipids. This is Chromosomal replication initiator protein DnaA from Shewanella denitrificans (strain OS217 / ATCC BAA-1090 / DSM 15013).